The chain runs to 525 residues: GMP synthase [glutamine-hydrolyzing] (525 aa).

Residues Lys8–Asn207 form the Glutamine amidotransferase type-1 domain. Catalysis depends on Cys85, which acts as the Nucleophile. Active-site residues include His181 and Glu183. A GMPS ATP-PPase domain is found at Trp208–Arg400. Residue Ser235–Ser241 coordinates ATP.

As to quaternary structure, homodimer.

The catalysed reaction is XMP + L-glutamine + ATP + H2O = GMP + L-glutamate + AMP + diphosphate + 2 H(+). Its pathway is purine metabolism; GMP biosynthesis; GMP from XMP (L-Gln route): step 1/1. In terms of biological role, catalyzes the synthesis of GMP from XMP. This is GMP synthase [glutamine-hydrolyzing] from Shewanella oneidensis (strain ATCC 700550 / JCM 31522 / CIP 106686 / LMG 19005 / NCIMB 14063 / MR-1).